Consider the following 723-residue polypeptide: DNA-binding protein RFX2 (723 aa).

The disordered stretch occupies residues 1 to 46 (MQNSEGGADSPASVALRPSAAAPPVPASPQRVLVQAASSAPKGAQM). The segment covering 10–20 (SPASVALRPSA) has biased composition (low complexity). Ser28 bears the Phosphoserine mark. The segment at residues 199 to 274 (HLQWLLDNYE…YHYYGIRLKP (76 aa)) is a DNA-binding region (RFX-type winged-helix). The segment at 292–332 (QQPMHQKPRYRPAQKTDSLGDSGSHSSLHSTPEQTMAAQSQ) is disordered. Positions 307 to 322 (TDSLGDSGSHSSLHST) are enriched in low complexity. Positions 323–332 (PEQTMAAQSQ) are enriched in polar residues. Position 416 is a phosphoserine (Ser416). The tract at residues 689–723 (GDERRGSEAGPDAHSLGEPLVKRERSDPNHSLQGI) is disordered.

Belongs to the RFX family. Homodimer; probably only forms homodimers in testis. Heterodimer; heterodimerizes with RFX1 and RFX3.

It localises to the nucleus. The protein localises to the cytoplasm. Functionally, transcription factor that acts as a key regulator of spermatogenesis. Acts by regulating expression of genes required for the haploid phase during spermiogenesis, such as genes required for cilium assembly and function. Recognizes and binds the X-box, a regulatory motif with DNA sequence 5'-GTNRCC(0-3N)RGYAAC-3' present on promoters. Probably activates transcription of the testis-specific histone gene H1-6. The chain is DNA-binding protein RFX2 (RFX2) from Macaca fascicularis (Crab-eating macaque).